A 189-amino-acid polypeptide reads, in one-letter code: ECF RNA polymerase sigma-E factor (189 aa).

Residues 1-153 (MAEQLTDQAL…TAITLRELEG (153 aa)) form a binds RNAP core region. The sigma-70 factor domain-2 stretch occupies residues 25–92 (LVSRYQNKVA…KNYLTAQGRR (68 aa)). A Polymerase core binding motif is present at residues 48–61 (DVVQESFIKAYRSI). Residues 129–180 (RIVFDTIHNLPEDLKTAITLRELEGLSYEDIAEIMDCPVGTVRSRIFRAREM) are sigma-70 factor domain-4. A DNA-binding region (H-T-H motif) is located at residues 156–175 (YEDIAEIMDCPVGTVRSRIF).

This sequence belongs to the sigma-70 factor family. ECF subfamily. In terms of assembly, interacts transiently with the RNAP catalytic core formed by RpoA, RpoB, RpoC and RpoZ (2 alpha, 1 beta, 1 beta' and 1 omega subunit) to form the RNAP holoenzyme that can initiate transcription. Interacts 1:1 with anti-sigma-E factor RseA which prevents binding to RNAP catalytic core.

It is found in the cytoplasm. Its activity is regulated as follows. ECF sigma-E is held in an inactive form by its cognate anti-sigma factor (RseA) until released by regulated intramembrane proteolysis (RIP). RIP occurs when an extracytoplasmic signal (periplasmic stress and excess LPS) triggers a concerted proteolytic cascade to transmit information and elicit cellular responses. The anti-sigma factor RseA is an inner membrane protein, binding sigma-E in the cytoplasm and RseB in the periplasm. RseA is first cut extracytoplasmically (site-1 protease, S1P, by DegS), then within the membrane itself (site-2 protease, S2P, by RseP), while cytoplasmic proteases (predominantly ClpX-ClpP) finish degrading the regulatory protein, liberating sigma-E. Degradation of RseA requires 2 signals to activate DegS; an outer membrane protein (OMP) signal activates DegS, while an LPS signal causes release of RseB from RseA, freeing RseA to be cleaved. Sigma factors are initiation factors that promote the attachment of RNA polymerase (RNAP) to specific initiation sites and are then released. Extracytoplasmic function (ECF) sigma-E controls the envelope stress response, responding to periplasmic protein stress, increased levels of periplasmic lipopolysaccharide (LPS) as well as heat shock and oxidative stress; it controls protein processing in the extracytoplasmic compartment. This is ECF RNA polymerase sigma-E factor (rpoE) from Haemophilus influenzae (strain ATCC 51907 / DSM 11121 / KW20 / Rd).